The following is a 184-amino-acid chain: ATP-dependent protease subunit HslV (184 aa).

Threonine 12 is a catalytic residue. Alanine 166, cysteine 169, and threonine 172 together coordinate Na(+).

This sequence belongs to the peptidase T1B family. HslV subfamily. As to quaternary structure, a double ring-shaped homohexamer of HslV is capped on each side by a ring-shaped HslU homohexamer. The assembly of the HslU/HslV complex is dependent on binding of ATP.

It localises to the cytoplasm. It catalyses the reaction ATP-dependent cleavage of peptide bonds with broad specificity.. With respect to regulation, allosterically activated by HslU binding. In terms of biological role, protease subunit of a proteasome-like degradation complex believed to be a general protein degrading machinery. This Brucella melitensis biotype 1 (strain ATCC 23456 / CCUG 17765 / NCTC 10094 / 16M) protein is ATP-dependent protease subunit HslV.